The following is a 74-amino-acid chain: Kappa-scoloptoxin(07)-Ssm2a (74 aa).

The signal sequence occupies residues 1-19; sequence MLVFYALLFVTVFSNTVMG. Positions 20–41 are excised as a propeptide; that stretch reads ATIDKPIPKPILREAIEEIEVN.

Belongs to the scoloptoxin-07 family. Post-translationally, contains 3 disulfide bonds. As to expression, expressed by the venom gland.

Its subcellular location is the secreted. Functionally, toxin that inhibits voltage-gated potassium channel currents in DRG neurons (IC(50)=about 570 nM). In vivo, induces neurotoxicity shown by twitching, paralysis, and body contraction. In vivo, insects injected with this toxin showed signs of neurotoxicity including twitching, paralysis, and body contraction. The chain is Kappa-scoloptoxin(07)-Ssm2a from Scolopendra mutilans (Chinese red-headed centipede).